A 168-amino-acid chain; its full sequence is Scytalone dehydratase arp1 (168 aa).

Substrate is bound by residues Tyr29 and Tyr49. Active-site residues include His84 and His109. A substrate-binding site is contributed by Asn130.

It belongs to the scytalone dehydratase family. As to quaternary structure, homotrimer. Each subunit contains an active site, located in the central part of the hydrophobic core of the monomer, which functions independently.

Its subcellular location is the endosome. The catalysed reaction is scytalone = 1,3,8-trihydroxynaphthalene + H2O. It functions in the pathway pigment biosynthesis; melanin biosynthesis. Fenoxanil inhibits arp1 scytalone dehydratase activity. In terms of biological role, scytalone dehydratase; part of the gene cluster that mediates the biosynthesis of dihydroxynaphthalene (DHN)-melanin, a bluish-green pigment and a structural component of the conidial wall. The first step of the pathway is the production of the heptaketide naphtopyrone YWA1 by the polyketide synthase alb1 though condensation of acetyl-CoA with malonyl-CoA. The naphtopyrone YWA1 is then converted to the pentaketide 1,3,6,8-tetrahydroxynaphthalene (1,3,6,8-THN) by the heptaketide hydrolyase ayg1 though chain-length shortening. 1,3,6,8-THN is substrate of the hydroxynaphthalene reductase arp2 to yield scytalone. The scytalone dehydratase arp1 then reduces scytalone to 1,3,8-THN. 1,3,8-THN is also substrate of the hydroxynaphthalene reductase arp2 to yield vermelone. Vermelone is further converted by the multicopper oxidase abr1 to 1,8-DHN. Finally the laccase abr2 transforms 1,8-DHN to DHN-melanin. DHN-melanin biosynthesis appears to be initiated in endosomes where early enzymes (abl1, ayg1, arp1 and arp2) localize, with exocytosis leading to melanin deposition on the cell surface where late enzymes (abr1 and abr2) localize. DHN-melanin is an important structural component of the outer cell wall and is required for the presence of conidial surface hydrophobins. DHN-melanin also plays a crucial role in fungal virulence, including a protective role against the host's immune defenses. DHN-melanin also protects conidia against amoeba predation. The protein is Scytalone dehydratase arp1 of Aspergillus fumigatus (strain ATCC MYA-4609 / CBS 101355 / FGSC A1100 / Af293) (Neosartorya fumigata).